A 312-amino-acid chain; its full sequence is Malate dehydrogenase (312 aa).

NAD(+) is bound by residues 12-17 (GAGFTG) and Asp-36. Positions 87 and 93 each coordinate substrate. Residues Asn-100 and 123-125 (LTN) each bind NAD(+). Residue Asn-125 participates in substrate binding. Ser-149 bears the Phosphoserine mark. Arg-156 is a substrate binding site. The Proton acceptor role is filled by His-180.

The protein belongs to the LDH/MDH superfamily. MDH type 3 family.

It carries out the reaction (S)-malate + NAD(+) = oxaloacetate + NADH + H(+). Functionally, catalyzes the reversible oxidation of malate to oxaloacetate. This is Malate dehydrogenase from Bacillus cytotoxicus (strain DSM 22905 / CIP 110041 / 391-98 / NVH 391-98).